A 718-amino-acid polypeptide reads, in one-letter code: Ribosomal RNA large subunit methyltransferase K/L (718 aa).

Residues 43 to 154 (TQYRILLWSR…QDELVVSLDL (112 aa)) enclose the THUMP domain.

This sequence belongs to the methyltransferase superfamily. RlmKL family.

It is found in the cytoplasm. It carries out the reaction guanosine(2445) in 23S rRNA + S-adenosyl-L-methionine = N(2)-methylguanosine(2445) in 23S rRNA + S-adenosyl-L-homocysteine + H(+). The catalysed reaction is guanosine(2069) in 23S rRNA + S-adenosyl-L-methionine = N(2)-methylguanosine(2069) in 23S rRNA + S-adenosyl-L-homocysteine + H(+). In terms of biological role, specifically methylates the guanine in position 2445 (m2G2445) and the guanine in position 2069 (m7G2069) of 23S rRNA. In Histophilus somni (strain 2336) (Haemophilus somnus), this protein is Ribosomal RNA large subunit methyltransferase K/L.